The following is a 568-amino-acid chain: MATMDRQSYAQMFGPTTGDRVRLGDTDIWIQVEKDFTVYGDEVKFGGGKVIRDGMGQSQVTNEIAVDLVITNALVLDHWGIVKGDVGIKDGRIFKVGKAGNPDVQDNVDIVVGPGTEVIAGEGSILTAGGIDAHIHFICPQQVEEALTSGVTTMIGGGTGPATGTKATTCTSGPWYLGKMLQATDSMPMNLGFLGKGNASLPEALEEQLEAGACGLKLHEDWGTTPASIDCCLSVAEAYDVQVAIHTDTLNESGFVDSTIDAFKDRVIHTYHTEGAGGGHAPDIIQACSNPNVLPSSTNPTRPYTHNTVDEHLDMLMVCHHLDSNIEEDVAFADSRIRKETIAAEDILHDRGAFSMISSDSQAMGRVGEVVTRTWQTAHKMKQQFGLLPEDQELGADNFRARRYIAKYTINPAIAHGISHEVGSIEPGKMADLVLWKPAFFAVKPSMIIKGGMIASAPMGDPNASIPTPQPVHYRPMFGSCGKAAAATSVTFVSKAALNNGLKESLGLERTLVACKNTRNISKLDMIHNDWLPNITVDPQTYEVRADGELLTCEPAETLPLAQLYTLF.

Positions 134, 136, and 217 each coordinate Ni(2+). Residue Lys217 is modified to N6-carboxylysine. His219 provides a ligand contact to substrate. Ni(2+)-binding residues include His246 and His272. His320 acts as the Proton donor in catalysis. Asp360 contributes to the Ni(2+) binding site.

It belongs to the metallo-dependent hydrolases superfamily. Urease alpha subunit family. Heterotrimer of UreA (gamma), UreB (beta) and UreC (alpha) subunits. Three heterotrimers associate to form the active enzyme. Requires Ni cation as cofactor. Carboxylation allows a single lysine to coordinate two nickel ions.

It localises to the cytoplasm. The enzyme catalyses urea + 2 H2O + H(+) = hydrogencarbonate + 2 NH4(+). The protein operates within nitrogen metabolism; urea degradation; CO(2) and NH(3) from urea (urease route): step 1/1. The protein is Urease subunit alpha of Marinomonas sp. (strain MWYL1).